A 229-amino-acid polypeptide reads, in one-letter code: Large ribosomal subunit protein uL1 (229 aa).

Belongs to the universal ribosomal protein uL1 family. As to quaternary structure, part of the 50S ribosomal subunit.

In terms of biological role, binds directly to 23S rRNA. The L1 stalk is quite mobile in the ribosome, and is involved in E site tRNA release. Protein L1 is also a translational repressor protein, it controls the translation of the L11 operon by binding to its mRNA. The sequence is that of Large ribosomal subunit protein uL1 from Listeria innocua serovar 6a (strain ATCC BAA-680 / CLIP 11262).